We begin with the raw amino-acid sequence, 248 residues long: Protein STPG4 (248 aa).

Interacts with histone H3. Interacts with histone H4.

Its subcellular location is the cytoplasm. The protein localises to the nucleus. Its function is as follows. Maternal factor that plays a role in epigenetic chromatin reprogramming during early development of the zygote. Involved in the regulation of gametic DNA demethylation by inducing the conversion of the modified genomic base 5-methylcytosine (5mC) into 5-hydroxymethylcytosine (5hmC). This chain is Protein STPG4, found in Homo sapiens (Human).